Reading from the N-terminus, the 79-residue chain is Acyl carrier protein (79 aa).

The Carrier domain occupies 1-76 (MSLEDDVIAI…DVFTYIKKRQ (76 aa)). Ser-36 is subject to O-(pantetheine 4'-phosphoryl)serine.

It belongs to the acyl carrier protein (ACP) family. 4'-phosphopantetheine is transferred from CoA to a specific serine of apo-ACP by AcpS. This modification is essential for activity because fatty acids are bound in thioester linkage to the sulfhydryl of the prosthetic group.

The protein resides in the cytoplasm. It functions in the pathway lipid metabolism; fatty acid biosynthesis. Functionally, carrier of the growing fatty acid chain in fatty acid biosynthesis. The protein is Acyl carrier protein of Chlamydia pneumoniae (Chlamydophila pneumoniae).